Here is a 324-residue protein sequence, read N- to C-terminus: Homeobox protein Nkx-2.5 (324 aa).

The segment at residues 138-197 is a DNA-binding region (homeobox); that stretch reads RRKPRVLFSQAQVYELERRFKQQRYLSAPERDQLASVLKLTSTQVKIWFQNRRYKCKRQR.

Belongs to the NK-2 homeobox family. As to quaternary structure, homodimer (via the homeobox); binds DNA as homodimer. Interacts (via the homeobox) with TBX5 (via the T-box); this complex binds DNA. Interacts with HIPK1 and HIPK2, but not HIPK3. Interacts with the C-terminal zinc finger of GATA4 through its homeobox domain. Also interacts with JARID2 which represses its ability to activate transcription of ANF. Interacts with FBLIM1. Interacts with TBX18. Interacts with histone methyltransferase NSD2 (via HMG box). Interacts with NEDD9. Interacts with TBX1. Expressed only in the heart.

The protein resides in the nucleus. In terms of biological role, transcription factor required for the development of the heart and the spleen. During heart development, acts as a transcriptional activator of NPPA/ANF in cooperation with GATA4. May cooperate with TBX2 to negatively modulate expression of NPPA/ANF in the atrioventricular canal. Binds to the core DNA motif of NPPA promoter. Together with PBX1, required for spleen development through a mechanism that involves CDKN2B repression. Positively regulates transcription of genes such as COL3A1 and MMP2, resulting in increased pulmonary endothelial fibrosis in response to hypoxia. The protein is Homeobox protein Nkx-2.5 (NKX2-5) of Homo sapiens (Human).